We begin with the raw amino-acid sequence, 438 residues long: GTPase Obg (438 aa).

The Obg domain maps to 2-160 (NMFVDQIKIE…HYLELELKML (159 aa)). One can recognise an OBG-type G domain in the interval 161 to 337 (ADVGLIGFPS…LMQLTADLLD (177 aa)). GTP-binding positions include 167-174 (GFPSVGKS), 192-196 (FTTLT), 214-217 (DMPG), 284-287 (TKMD), and 318-320 (SAV). Residues serine 174 and threonine 194 each contribute to the Mg(2+) site. Positions 360 to 438 (PDKKDEADFT…IEKFVFEFIQ (79 aa)) constitute an OCT domain.

This sequence belongs to the TRAFAC class OBG-HflX-like GTPase superfamily. OBG GTPase family. In terms of assembly, monomer. It depends on Mg(2+) as a cofactor.

Its subcellular location is the cytoplasm. In terms of biological role, an essential GTPase which binds GTP, GDP and possibly (p)ppGpp with moderate affinity, with high nucleotide exchange rates and a fairly low GTP hydrolysis rate. Plays a role in control of the cell cycle, stress response, ribosome biogenesis and in those bacteria that undergo differentiation, in morphogenesis control. The sequence is that of GTPase Obg from Limosilactobacillus reuteri (strain DSM 20016) (Lactobacillus reuteri).